An 84-amino-acid chain; its full sequence is Toxin Tb1 (84 aa).

An N-terminal signal peptide occupies residues 1 to 20 (MKGMILFISCLLLIGIVVEC). An LCN-type CS-alpha/beta domain is found at 21–82 (KEGYLMDHEG…VWDRATNKCG (62 aa)). Disulfide bonds link Cys-31-Cys-81, Cys-35-Cys-57, Cys-43-Cys-62, and Cys-47-Cys-64. Position 81 is a cysteine amide (Cys-81).

Belongs to the long (4 C-C) scorpion toxin superfamily. Sodium channel inhibitor family. Beta subfamily. In terms of tissue distribution, expressed by the venom gland.

It is found in the secreted. In terms of biological role, beta toxins bind voltage-independently at site-4 of sodium channels (Nav) and shift the voltage of activation toward more negative potentials thereby affecting sodium channel activation and promoting spontaneous and repetitive firing. Is lethal to mice. This Tityus bahiensis (Brazilian scorpion) protein is Toxin Tb1.